The following is a 188-amino-acid chain: dCTP deaminase (188 aa).

Residues 111-116 (KSTYAR), 135-137 (TLE), Q156, Y170, and Q180 each bind dCTP. The active-site Proton donor/acceptor is the E137.

This sequence belongs to the dCTP deaminase family. As to quaternary structure, homotrimer.

It carries out the reaction dCTP + H2O + H(+) = dUTP + NH4(+). The protein operates within pyrimidine metabolism; dUMP biosynthesis; dUMP from dCTP (dUTP route): step 1/2. In terms of biological role, catalyzes the deamination of dCTP to dUTP. The sequence is that of dCTP deaminase from Dichelobacter nodosus (strain VCS1703A).